The following is a 439-amino-acid chain: Cell division protein DivIB (439 aa).

Disordered stretches follow at residues 1–96 (MDDK…DSNI) and 119–149 (DNEQ…KSKV). At 1 to 173 (MDDKTKNDQQ…RRKRQKRIQY (173 aa)) the chain is on the cytoplasmic side. The segment covering 11 to 20 (ESNEDKDELE) has biased composition (acidic residues). A compositionally biased stretch (basic residues) spans 26 to 38 (TSKKRRQRKRSKA). Residues 64 to 76 (KDFKKEESNDKNN) are compositionally biased toward basic and acidic residues. Residues 77-86 (DSASSHANDN) are compositionally biased toward low complexity. Residues 87-96 (NIDDSTDSNI) show a composition bias toward acidic residues. Polar residues predominate over residues 119–133 (DNEQPQSAPKEQNSD). A helical membrane pass occupies residues 174 to 194 (SVITILVLLIAVILIYMFSPL). The POTRA domain maps to 195 to 263 (SKIAHVNING…NTLNVDITEN (69 aa)). Residues 195–439 (SKIAHVNING…KINKQSSKNN (245 aa)) are Extracellular-facing. The segment at 396–439 (YRGNTSSQSESDKNVTKSSQEENQAKEELQSVLNKINKQSSKNN) is disordered. Basic and acidic residues predominate over residues 405–424 (ESDKNVTKSSQEENQAKEEL). A compositionally biased stretch (polar residues) spans 426–439 (SVLNKINKQSSKNN).

The protein belongs to the FtsQ/DivIB family. DivIB subfamily.

The protein resides in the cell membrane. Cell division protein that may be involved in stabilizing or promoting the assembly of the division complex. This is Cell division protein DivIB from Staphylococcus aureus (strain NCTC 8325 / PS 47).